A 267-amino-acid polypeptide reads, in one-letter code: Thiazole synthase (267 aa).

The Schiff-base intermediate with DXP role is filled by Lys-107. Residues Gly-168, 194–195 (AG), and 216–217 (NT) contribute to the 1-deoxy-D-xylulose 5-phosphate site.

It belongs to the ThiG family. As to quaternary structure, homotetramer. Forms heterodimers with either ThiH or ThiS.

The protein resides in the cytoplasm. It carries out the reaction [ThiS sulfur-carrier protein]-C-terminal-Gly-aminoethanethioate + 2-iminoacetate + 1-deoxy-D-xylulose 5-phosphate = [ThiS sulfur-carrier protein]-C-terminal Gly-Gly + 2-[(2R,5Z)-2-carboxy-4-methylthiazol-5(2H)-ylidene]ethyl phosphate + 2 H2O + H(+). It participates in cofactor biosynthesis; thiamine diphosphate biosynthesis. Catalyzes the rearrangement of 1-deoxy-D-xylulose 5-phosphate (DXP) to produce the thiazole phosphate moiety of thiamine. Sulfur is provided by the thiocarboxylate moiety of the carrier protein ThiS. In vitro, sulfur can be provided by H(2)S. In Aquifex aeolicus (strain VF5), this protein is Thiazole synthase.